A 186-amino-acid chain; its full sequence is Nucleoside diphosphate kinase 6 (186 aa).

Positions 19, 68, 96, 102, 116, and 126 each coordinate ATP. The active-site Pros-phosphohistidine intermediate is H129.

It belongs to the NDK family. Mg(2+) is required as a cofactor. As to expression, expressed at a moderately low level in many tissues. Most abundant in kidney, prostate, ovary, intestine, and spleen.

The enzyme catalyses a 2'-deoxyribonucleoside 5'-diphosphate + ATP = a 2'-deoxyribonucleoside 5'-triphosphate + ADP. The catalysed reaction is a ribonucleoside 5'-diphosphate + ATP = a ribonucleoside 5'-triphosphate + ADP. Its function is as follows. Major role in the synthesis of nucleoside triphosphates other than ATP. The ATP gamma phosphate is transferred to the NDP beta phosphate via a ping-pong mechanism, using a phosphorylated active-site intermediate. Inhibitor of p53-induced apoptosis. The protein is Nucleoside diphosphate kinase 6 (NME6) of Homo sapiens (Human).